Reading from the N-terminus, the 93-residue chain is Cell division protein FtsB (93 aa).

The Cytoplasmic portion of the chain corresponds to 1-3 (MRI). Residues 4–21 (FVIALTLLFGWLQYTLWF) form a helical membrane-spanning segment. At 22–93 (GKNGVSDYYT…FYRIVDEEEH (72 aa)) the chain is on the periplasmic side. Residues 31–75 (TVEDEIEVQQQVNSKLQARNNEMFAEIDDLRQGLDAIEERARHEL) adopt a coiled-coil conformation.

Belongs to the FtsB family. Part of a complex composed of FtsB, FtsL and FtsQ.

It localises to the cell inner membrane. Functionally, essential cell division protein. May link together the upstream cell division proteins, which are predominantly cytoplasmic, with the downstream cell division proteins, which are predominantly periplasmic. In Vibrio campbellii (strain ATCC BAA-1116), this protein is Cell division protein FtsB.